Here is a 710-residue protein sequence, read N- to C-terminus: DNA ligase (710 aa).

The segment at 1–26 (MPEDAIGQQVPPEQEAAGAEPTSAAR) is disordered. NAD(+) contacts are provided by residues 53–57 (DAEFD), 102–103 (SL), and E132. The N6-AMP-lysine intermediate role is filled by K134. The NAD(+) site is built by R155, E196, K312, and K336. Zn(2+) contacts are provided by C430, C433, C449, and C455. The BRCT domain maps to 619 to 708 (EGPRPLEGMT…PDAAREVARV (90 aa)).

The protein belongs to the NAD-dependent DNA ligase family. LigA subfamily. Requires Mg(2+) as cofactor. Mn(2+) serves as cofactor.

The enzyme catalyses NAD(+) + (deoxyribonucleotide)n-3'-hydroxyl + 5'-phospho-(deoxyribonucleotide)m = (deoxyribonucleotide)n+m + AMP + beta-nicotinamide D-nucleotide.. Functionally, DNA ligase that catalyzes the formation of phosphodiester linkages between 5'-phosphoryl and 3'-hydroxyl groups in double-stranded DNA using NAD as a coenzyme and as the energy source for the reaction. It is essential for DNA replication and repair of damaged DNA. This Salinispora arenicola (strain CNS-205) protein is DNA ligase.